The sequence spans 126 residues: Protein ApaG (126 aa).

The ApaG domain maps to 2–126 (NQLAASVSVD…FRLSIPGLLH (125 aa)).

This is Protein ApaG from Shewanella pealeana (strain ATCC 700345 / ANG-SQ1).